Reading from the N-terminus, the 488-residue chain is Secreted triacylglycerol lipase LIP1 (488 aa).

The N-terminal stretch at 1-26 is a signal peptide; it reads MPSMLSLFYLAQSLFLLLLFPLYGHA. Cysteines 119 and 288 form a disulfide. The N-linked (GlcNAc...) asparagine glycan is linked to asparagine 183. Serine 201 functions as the Nucleophile in the catalytic mechanism. N-linked (GlcNAc...) asparagine glycosylation is present at asparagine 316. Active-site residues include aspartate 348 and histidine 382. The segment at 461 to 488 is disordered; that stretch reads SKSGSSLKSHSHSQTHKHRKDVSTISNA. Positions 469 to 480 are enriched in basic residues; the sequence is SHSHSQTHKHRK.

The protein belongs to the AB hydrolase superfamily. Lipase family. Class Lip subfamily.

It is found in the secreted. The enzyme catalyses a triacylglycerol + H2O = a diacylglycerol + a fatty acid + H(+). It catalyses the reaction a monoacylglycerol + H2O = glycerol + a fatty acid + H(+). The catalysed reaction is a diacylglycerol + H2O = a monoacylglycerol + a fatty acid + H(+). Inhibited by different metal ions including Fe(2+), Fe(3+), Cu(2+), and Zn(2+). The monovalent ions Na(+) and K(+) exhibit less dramatic inhibition. Secreted lipase that releases free fatty acids from monoacylglycerol and triacylglycerol but has no phospholipase or lysophospholipase activities. Has minor esterase activity. Due to an absence of fatty acid synthase genes in Malassezia species, secretory lipases are essential for the yeast to generate free fatty acids from degradation of sebum and assimilate them as lipid sources for growth. Plays important roles not only in lipid metabolism but also in the immune response of host cells and pathogenesis. Hydrolyzes lipids, such as Tween 20, 40 and 80, with Tween 80 being the best substrate. The sequence is that of Secreted triacylglycerol lipase LIP1 from Malassezia furfur (Pityriasis versicolor infection agent).